The chain runs to 894 residues: Translation initiation factor IF-2 (894 aa).

Residues 52 to 301 (DRGAAPNKLT…RRPSTLTQGF (250 aa)) are disordered. The span at 68–82 (STLNIPSTGGKSKSV) shows a compositional bias: polar residues. Residues 107–154 (EQARREAEELAQHQVQRDAEEKAKRAAEDKAKREAAEQAKRVAAESDK) are compositionally biased toward basic and acidic residues. Residues 155 to 168 (LTNQQTNTMTKSPQ) are compositionally biased toward polar residues. Composition is skewed to basic and acidic residues over residues 171–214 (EKAR…ERGG) and 237–254 (HAREAEDENDRKVEGDRR). The segment covering 255–269 (SRTRGGKATKQKKTS) has biased composition (basic residues). Basic and acidic residues predominate over residues 270–283 (RLSESKADREEARA). The tr-type G domain maps to 393–562 (SRAPVVTIMG…LLQAEVLELK (170 aa)). The G1 stretch occupies residues 402–409 (GHVDHGKT). Position 402–409 (402–409 (GHVDHGKT)) interacts with GTP. Residues 427-431 (GITQH) form a G2 region. The tract at residues 448-451 (DTPG) is G3. GTP-binding positions include 448-452 (DTPGH) and 502-505 (NKID). Positions 502–505 (NKID) are G4. Residues 538-540 (SAK) are G5.

Belongs to the TRAFAC class translation factor GTPase superfamily. Classic translation factor GTPase family. IF-2 subfamily.

It localises to the cytoplasm. In terms of biological role, one of the essential components for the initiation of protein synthesis. Protects formylmethionyl-tRNA from spontaneous hydrolysis and promotes its binding to the 30S ribosomal subunits. Also involved in the hydrolysis of GTP during the formation of the 70S ribosomal complex. This is Translation initiation factor IF-2 from Sodalis glossinidius (strain morsitans).